A 545-amino-acid polypeptide reads, in one-letter code: Chaperonin GroEL (545 aa).

Residues 30–33 (TLGP), Lys51, 87–91 (DGTTT), Gly415, and Asp495 each bind ATP.

Belongs to the chaperonin (HSP60) family. In terms of assembly, forms a cylinder of 14 subunits composed of two heptameric rings stacked back-to-back. Interacts with the co-chaperonin GroES.

The protein resides in the cytoplasm. It carries out the reaction ATP + H2O + a folded polypeptide = ADP + phosphate + an unfolded polypeptide.. Together with its co-chaperonin GroES, plays an essential role in assisting protein folding. The GroEL-GroES system forms a nano-cage that allows encapsulation of the non-native substrate proteins and provides a physical environment optimized to promote and accelerate protein folding. The polypeptide is Chaperonin GroEL (Shewanella baltica (strain OS185)).